The following is a 253-amino-acid chain: Imidazole glycerol phosphate synthase subunit HisF (253 aa).

Catalysis depends on residues D11 and D130.

This sequence belongs to the HisA/HisF family. As to quaternary structure, heterodimer of HisH and HisF.

The protein resides in the cytoplasm. It carries out the reaction 5-[(5-phospho-1-deoxy-D-ribulos-1-ylimino)methylamino]-1-(5-phospho-beta-D-ribosyl)imidazole-4-carboxamide + L-glutamine = D-erythro-1-(imidazol-4-yl)glycerol 3-phosphate + 5-amino-1-(5-phospho-beta-D-ribosyl)imidazole-4-carboxamide + L-glutamate + H(+). The protein operates within amino-acid biosynthesis; L-histidine biosynthesis; L-histidine from 5-phospho-alpha-D-ribose 1-diphosphate: step 5/9. In terms of biological role, IGPS catalyzes the conversion of PRFAR and glutamine to IGP, AICAR and glutamate. The HisF subunit catalyzes the cyclization activity that produces IGP and AICAR from PRFAR using the ammonia provided by the HisH subunit. The protein is Imidazole glycerol phosphate synthase subunit HisF of Thermotoga sp. (strain RQ2).